Reading from the N-terminus, the 204-residue chain is Histidine biosynthesis bifunctional protein HisIE (204 aa).

A phosphoribosyl-AMP cyclohydrolase region spans residues Met-1–Phe-114. The segment at Leu-115–Lys-204 is phosphoribosyl-ATP pyrophosphohydrolase.

The protein in the N-terminal section; belongs to the PRA-CH family. This sequence in the C-terminal section; belongs to the PRA-PH family.

The protein localises to the cytoplasm. The enzyme catalyses 1-(5-phospho-beta-D-ribosyl)-ATP + H2O = 1-(5-phospho-beta-D-ribosyl)-5'-AMP + diphosphate + H(+). It catalyses the reaction 1-(5-phospho-beta-D-ribosyl)-5'-AMP + H2O = 1-(5-phospho-beta-D-ribosyl)-5-[(5-phospho-beta-D-ribosylamino)methylideneamino]imidazole-4-carboxamide. Its pathway is amino-acid biosynthesis; L-histidine biosynthesis; L-histidine from 5-phospho-alpha-D-ribose 1-diphosphate: step 2/9. The protein operates within amino-acid biosynthesis; L-histidine biosynthesis; L-histidine from 5-phospho-alpha-D-ribose 1-diphosphate: step 3/9. The sequence is that of Histidine biosynthesis bifunctional protein HisIE (hisI) from Yersinia pestis.